The following is a 227-amino-acid chain: Orotidine 5'-phosphate decarboxylase (227 aa).

Residues D8, K30, 59 to 68, T118, R178, Q187, G207, and R208 contribute to the substrate site; that span reads DLKLYDIPYT. Residue K61 is the Proton donor of the active site.

This sequence belongs to the OMP decarboxylase family. Type 1 subfamily. As to quaternary structure, homodimer.

The catalysed reaction is orotidine 5'-phosphate + H(+) = UMP + CO2. It participates in pyrimidine metabolism; UMP biosynthesis via de novo pathway; UMP from orotate: step 2/2. Its function is as follows. Catalyzes the decarboxylation of orotidine 5'-monophosphate (OMP) to uridine 5'-monophosphate (UMP). This Helicobacter pylori (strain J99 / ATCC 700824) (Campylobacter pylori J99) protein is Orotidine 5'-phosphate decarboxylase.